We begin with the raw amino-acid sequence, 104 residues long: UPF0145 protein VIBHAR_02090 (104 aa).

It belongs to the UPF0145 family.

The protein is UPF0145 protein VIBHAR_02090 of Vibrio campbellii (strain ATCC BAA-1116).